Here is a 206-residue protein sequence, read N- to C-terminus: Large ribosomal subunit protein uL4 (206 aa).

The protein belongs to the universal ribosomal protein uL4 family. In terms of assembly, part of the 50S ribosomal subunit.

Functionally, one of the primary rRNA binding proteins, this protein initially binds near the 5'-end of the 23S rRNA. It is important during the early stages of 50S assembly. It makes multiple contacts with different domains of the 23S rRNA in the assembled 50S subunit and ribosome. Its function is as follows. Forms part of the polypeptide exit tunnel. The sequence is that of Large ribosomal subunit protein uL4 from Nitrobacter hamburgensis (strain DSM 10229 / NCIMB 13809 / X14).